Consider the following 81-residue polypeptide: Large ribosomal subunit protein bL31B (81 aa).

This sequence belongs to the bacterial ribosomal protein bL31 family. Type B subfamily. Part of the 50S ribosomal subunit.

This Halalkalibacterium halodurans (strain ATCC BAA-125 / DSM 18197 / FERM 7344 / JCM 9153 / C-125) (Bacillus halodurans) protein is Large ribosomal subunit protein bL31B.